Reading from the N-terminus, the 200-residue chain is Holliday junction branch migration complex subunit RuvA (200 aa).

The domain I stretch occupies residues 1-63 (MIASVRGVVT…EDSLTLYGFA (63 aa)). A domain II region spans residues 64–142 (DDNAKALFEL…PVPVGGDGAA (79 aa)). A flexible linker region spans residues 143–151 (GVTTGAWPE). Positions 151–200 (EQVRQALVGLGWTAGQAEQAVAAVAETVDGEVPPVPVLLRQAIRLLGRTR) are domain III.

This sequence belongs to the RuvA family. Homotetramer. Forms an RuvA(8)-RuvB(12)-Holliday junction (HJ) complex. HJ DNA is sandwiched between 2 RuvA tetramers; dsDNA enters through RuvA and exits via RuvB. An RuvB hexamer assembles on each DNA strand where it exits the tetramer. Each RuvB hexamer is contacted by two RuvA subunits (via domain III) on 2 adjacent RuvB subunits; this complex drives branch migration. In the full resolvosome a probable DNA-RuvA(4)-RuvB(12)-RuvC(2) complex forms which resolves the HJ.

It localises to the cytoplasm. Functionally, the RuvA-RuvB-RuvC complex processes Holliday junction (HJ) DNA during genetic recombination and DNA repair, while the RuvA-RuvB complex plays an important role in the rescue of blocked DNA replication forks via replication fork reversal (RFR). RuvA specifically binds to HJ cruciform DNA, conferring on it an open structure. The RuvB hexamer acts as an ATP-dependent pump, pulling dsDNA into and through the RuvAB complex. HJ branch migration allows RuvC to scan DNA until it finds its consensus sequence, where it cleaves and resolves the cruciform DNA. The polypeptide is Holliday junction branch migration complex subunit RuvA (Salinispora arenicola (strain CNS-205)).